Here is a 546-residue protein sequence, read N- to C-terminus: Probable protein kinase UbiB (546 aa).

In terms of domain architecture, Protein kinase spans 124-502; it reads DFSVEPLASA…HVRQGQSRYL (379 aa). ATP is bound by residues 130–138 and Lys153; that span reads LASASIAQV. The Proton acceptor role is filled by Asp288. 2 helical membrane passes run 501-521 and 522-542; these read YLFGIGAVLLLSGTLLFIHRP and EWGMMPGWLMAGGVVTWLIGW.

Belongs to the ABC1 family. UbiB subfamily.

The protein localises to the cell inner membrane. The protein operates within cofactor biosynthesis; ubiquinone biosynthesis [regulation]. Is probably a protein kinase regulator of UbiI activity which is involved in aerobic coenzyme Q (ubiquinone) biosynthesis. This is Probable protein kinase UbiB from Klebsiella pneumoniae (strain 342).